Here is a 404-residue protein sequence, read N- to C-terminus: Interferon-activable protein 205-A (404 aa).

The Pyrin domain maps to methionine 1–glutamate 88. The interval glutamate 85–proline 198 is disordered. Low complexity-rich tracts occupy residues alanine 102–serine 112 and threonine 122–alanine 132. A compositionally biased stretch (basic and acidic residues) spans glycine 137 to lysine 147. The segment covering glutamine 168–alanine 185 has biased composition (low complexity). The segment covering lysine 186 to isoleucine 197 has biased composition (polar residues). The HIN-200 domain maps to proline 192–threonine 392.

It belongs to the HIN-200 family.

It is found in the nucleus. May act as a transcriptional regulator in the myeloid lineage. Inhibits cell growth via p53/TP53 and RB1-dependent and independent pathways. In Mus musculus (Mouse), this protein is Interferon-activable protein 205-A (Ifi205a).